Here is a 98-residue protein sequence, read N- to C-terminus: MNPSAAVIFCLILLGLSGTQGIPLARTVRCNCIHIDDGPVRMRAIGKLEIIPASLSCPRVEIIATMKKNDEQRCLNPESKTIKNLMKAFSQKRSKRAP.

The N-terminal stretch at 1–21 (MNPSAAVIFCLILLGLSGTQG) is a signal peptide. Arg26 is subject to Citrulline. 2 cysteine pairs are disulfide-bonded: Cys30-Cys57 and Cys32-Cys74.

It belongs to the intercrine alpha (chemokine CxC) family. In terms of assembly, monomer, dimer, and tetramer. Interacts with CXCR3 (via N-terminus). As to expression, expressed in the spleen, thymus, lymph nodes and liver. Expressed in astrocytes, microglia, and neurons.

The protein resides in the secreted. Its function is as follows. Pro-inflammatory cytokine that is involved in a wide variety of processes such as chemotaxis, differentiation, and activation of peripheral immune cells, regulation of cell growth, apoptosis and modulation of angiostatic effects. Plays thereby an important role during viral infections by stimulating the activation and migration of immune cells to the infected sites. Mechanistically, binding of CXCL10 to the CXCR3 receptor activates G protein-mediated signaling and results in downstream activation of phospholipase C-dependent pathway, an increase in intracellular calcium production and actin reorganization. In turn, recruitment of activated Th1 lymphocytes occurs at sites of inflammation. Activation of the CXCL10/CXCR3 axis also plays an important role in neurons in response to brain injury for activating microglia, the resident macrophage population of the central nervous system, and directing them to the lesion site. This recruitment is an essential element for neuronal reorganization. This Mus musculus (Mouse) protein is C-X-C motif chemokine 10 (Cxcl10).